Here is a 280-residue protein sequence, read N- to C-terminus: Movement protein (280 aa).

The disordered stretch occupies residues 248–267 (ESEELNVESPPAAIGSSSAS). The segment covering 255-267 (ESPPAAIGSSSAS) has biased composition (low complexity).

Belongs to the cucumovirus movement protein family.

The protein resides in the host cell junction. Its subcellular location is the host plasmodesma. In terms of biological role, transports viral genome to neighboring plant cells directly through plasmosdesmata, without any budding. The movement protein allows efficient cell to cell propagation, by bypassing the host cell wall barrier. Acts by forming a tubular structure at the host plasmodesmata, enlarging it enough to allow free passage of virion capsids. This Cucumis sativus (Cucumber) protein is Movement protein.